A 393-amino-acid chain; its full sequence is Pyridinium-3,5-bisthiocarboxylic acid mononucleotide nickel insertion protein (393 aa).

This sequence belongs to the LarC family.

The enzyme catalyses Ni(II)-pyridinium-3,5-bisthiocarboxylate mononucleotide = pyridinium-3,5-bisthiocarboxylate mononucleotide + Ni(2+). In terms of biological role, involved in the biosynthesis of a nickel-pincer cofactor ((SCS)Ni(II) pincer complex). Binds Ni(2+), and functions in nickel delivery to pyridinium-3,5-bisthiocarboxylic acid mononucleotide (P2TMN), to form the mature cofactor. Is thus probably required for the activation of nickel-pincer cofactor-dependent enzymes. This chain is Pyridinium-3,5-bisthiocarboxylic acid mononucleotide nickel insertion protein, found in Nocardioides sp. (strain ATCC BAA-499 / JS614).